Here is a 357-residue protein sequence, read N- to C-terminus: 4-hydroxy-3-methylbut-2-en-1-yl diphosphate synthase (flavodoxin) (357 aa).

[4Fe-4S] cluster is bound by residues C264, C267, C299, and E306.

This sequence belongs to the IspG family. [4Fe-4S] cluster is required as a cofactor.

It carries out the reaction (2E)-4-hydroxy-3-methylbut-2-enyl diphosphate + oxidized [flavodoxin] + H2O + 2 H(+) = 2-C-methyl-D-erythritol 2,4-cyclic diphosphate + reduced [flavodoxin]. Its pathway is isoprenoid biosynthesis; isopentenyl diphosphate biosynthesis via DXP pathway; isopentenyl diphosphate from 1-deoxy-D-xylulose 5-phosphate: step 5/6. Converts 2C-methyl-D-erythritol 2,4-cyclodiphosphate (ME-2,4cPP) into 1-hydroxy-2-methyl-2-(E)-butenyl 4-diphosphate. This chain is 4-hydroxy-3-methylbut-2-en-1-yl diphosphate synthase (flavodoxin), found in Campylobacter jejuni subsp. jejuni serotype O:2 (strain ATCC 700819 / NCTC 11168).